Reading from the N-terminus, the 80-residue chain is MDVKHIKDYLSWLYYQYLLITCSYVLEPWEQSIFNTLLLTIIAMVIYSSYIFIPIHVRLAVEFFSGIFGGQHESTVALMS.

At 1 to 11 (MDVKHIKDYLS) the chain is on the cytoplasmic side. A helical membrane pass occupies residues 12 to 29 (WLYYQYLLITCSYVLEPW). Residues 30 to 36 (EQSIFNT) are Lumenal-facing. The chain crosses the membrane as a helical span at residues 37-57 (LLLTIIAMVIYSSYIFIPIHV). Over 58 to 80 (RLAVEFFSGIFGGQHESTVALMS) the chain is Cytoplasmic.

This sequence belongs to the SPTSS family. SPTSSB subfamily. As to quaternary structure, component of the serine palmitoyltransferase (SPT) complex, which is composed of SPTLC1, SPTLC2 or SPTLC3 and SPTSSA or SPTSSB. The heterodimer consisting of SPTLC1 and SPTLC2/SPTLC3 forms the catalytic core of the enzyme, while SPTSSA or SPTSSB subunits determine substrate specificity. SPT also interacts with ORMDL proteins, especially ORMDL3, which negatively regulate SPT activity in the presence of ceramides.

It is found in the endoplasmic reticulum membrane. It participates in lipid metabolism; sphingolipid metabolism. Its function is as follows. Component of the serine palmitoyltransferase multisubunit enzyme (SPT) that catalyzes the initial and rate-limiting step in sphingolipid biosynthesis by condensing L-serine and activated acyl-CoA (most commonly palmitoyl-CoA) to form long-chain bases. The SPT complex is composed of SPTLC1, SPTLC2 or SPTLC3 and SPTSSA or SPTSSB. Within this complex, the heterodimer consisting of SPTLC1 and SPTLC2/SPTLC3 forms the catalytic core. Within the SPT complex, SPTSSB stimulates the catalytic activity and plays a role in substrate specificity. SPT complexes with this subunit showing a preference for longer acyl-CoAs. The SPTLC1-SPTLC2-SPTSSB complex shows a strong preference for C18-CoA substrate, while the SPTLC1-SPTLC3-SPTSSB isozyme displays an ability to use a broader range of acyl-CoAs, without apparent preference. The sequence is that of Serine palmitoyltransferase small subunit B (sptssb) from Xenopus tropicalis (Western clawed frog).